Reading from the N-terminus, the 205-residue chain is Putative glutamine amidotransferase-like protein L716 (205 aa).

The 176-residue stretch at 1-176 (MLLIIQNGYI…SNHIESYDYA (176 aa)) folds into the Glutamine amidotransferase type-1 domain. Residues Cys-82, His-155, and Asp-157 each act as for GATase activity in the active site.

This chain is Putative glutamine amidotransferase-like protein L716, found in Acanthamoeba polyphaga mimivirus (APMV).